An 86-amino-acid polypeptide reads, in one-letter code: MKSIVFVALLGLALLAVVCSASEDAHKELLKEVVRAMVVDKTDAVQAEERECRWYLGGCSQDGDCCKHLQCHSNYEWCVWDGTFSK.

The first 21 residues, 1 to 21 (MKSIVFVALLGLALLAVVCSA), serve as a signal peptide directing secretion. A propeptide spanning residues 22–50 (SEDAHKELLKEVVRAMVVDKTDAVQAEER) is cleaved from the precursor. 3 disulfide bridges follow: cysteine 52-cysteine 66, cysteine 59-cysteine 71, and cysteine 65-cysteine 78.

It belongs to the neurotoxin 10 (Hwtx-1) family. 17 (Hntx-9) subfamily. As to expression, expressed by the venom gland.

Its subcellular location is the secreted. In terms of biological role, ion channel inhibitor. The polypeptide is Omega-theraphotoxin-Hhn1a 2 (Cyriopagopus hainanus (Chinese bird spider)).